The chain runs to 622 residues: Low affinity potassium transport system protein Kup (622 aa).

12 consecutive transmembrane segments (helical) span residues 9–29, 49–69, 103–123, 137–157, 165–185, 213–233, 247–267, 276–296, 337–357, 363–383, 396–416, and 419–439; these read LPAI…TSPL, VFGF…IKYL, VIMG…TPAI, PQLD…LFMI, VGKL…GLGL, VSFI…ALYA, WFTV…ALLL, PFFL…AALA, IYIP…IVSF, LAAA…ILST, FVAL…TANL, and LLSG…VMTT.

The protein belongs to the HAK/KUP transporter (TC 2.A.72) family.

The protein resides in the cell inner membrane. It catalyses the reaction K(+)(in) + H(+)(in) = K(+)(out) + H(+)(out). Functionally, responsible for the low-affinity transport of potassium into the cell. Likely operates as a K(+):H(+) symporter. This is Low affinity potassium transport system protein Kup from Shigella flexneri serotype 5b (strain 8401).